The primary structure comprises 265 residues: uncharacterized protein (265 aa).

Position 47 (glutamate 47) interacts with thiamine diphosphate. A thiamine pyrophosphate binding region spans residues 204–247 (QHQMWLVQHILRVARHCGFTVTTMEMTLIETQVRLKITVKSDRT).

The protein belongs to the TPP enzyme family. It depends on Mg(2+) as a cofactor. Requires thiamine diphosphate as cofactor.

Its function is as follows. Truncated acetolactase synthase; no longer catalytically active. This is an uncharacterized protein from Haemophilus influenzae (strain ATCC 51907 / DSM 11121 / KW20 / Rd).